Reading from the N-terminus, the 137-residue chain is Protein E6 (137 aa).

2 zinc fingers span residues 17–53 (CVWC…CTTC) and 90–127 (CCYC…CYDC).

Belongs to the papillomaviridae E6 protein family. Forms homodimers. Interacts with ubiquitin-protein ligase UBE3A/E6-AP; this interaction stimulates UBE3A ubiquitin activity. Interacts with host BAK1.

It is found in the host cytoplasm. The protein localises to the host nucleus. In terms of biological role, plays a major role in the induction and maintenance of cellular transformation. E6 associates with host UBE3A/E6-AP ubiquitin-protein ligase and modulates its activity. Protects host keratinocytes from apoptosis by mediating the degradation of host BAK1. May also inhibit host immune response. In Bos taurus (Bovine), this protein is Protein E6.